Consider the following 305-residue polypeptide: Phosphatidylinositol:ceramide inositolphosphotransferase 2 (305 aa).

6 helical membrane-spanning segments follow: residues 34-54 (LLAGLICQYIHGLAAKGVHYI), 81-101 (ETVFTSVFLSFFLWTFHPFIL), 105-125 (KIYTVLIWCRVLAFLVACQFL), 168-188 (VMYGCGDLIFSSHMIFTLVFV), 198-218 (RFIKLFGWLTAIVQSLLIIAS), and 221-241 (HYSVDVVVAWYTVNLVVFCLD). Histidine 180 is a catalytic residue. Catalysis depends on residues histidine 221 and aspartate 225.

This sequence belongs to the sphingomyelin synthase family. As to expression, expressed in leaves, roots, stems, flowers and siliques.

It is found in the golgi apparatus. It localises to the trans-Golgi network membrane. The enzyme catalyses an N-(2R-hydroxy-very-long-chain fatty acyl)-(R)-4-hydroxysphingoid base + a 1,2-diacyl-sn-glycero-3-phospho-(1D-myo-inositol) = a 1D-myo-inositol-1-phospho-N-[(R)-2-hydroxy-very-long-chain fatty acyl]-(R)-4-hydroxysphingoid base + a 1,2-diacyl-sn-glycerol. Its pathway is sphingolipid metabolism. Its function is as follows. Catalyzes the transfer of the phosphorylinositol group from phosphatidylinositol (PI) to phytoceramide, an essential step in sphingolipid biosynthesis. May play an important role in modulating plant programmed cell death (PCD) associated with defense (e.g. toward Golovinomyces cichoracearum) by promoting sphingolipid metabolism and thus regulating ceramide accumulation. This chain is Phosphatidylinositol:ceramide inositolphosphotransferase 2, found in Arabidopsis thaliana (Mouse-ear cress).